The chain runs to 554 residues: Intraflagellar transport protein 56 (554 aa).

Residues 1–27 (MMLSRAKPAVGGESPHTDKRKKKGRKI) are disordered. Over residues 18 to 27 (DKRKKKGRKI) the composition is skewed to basic residues. 4 TPR repeats span residues 57 to 90 (DDTN…ENCN), 92 to 125 (EVWV…LQNR), 151 to 184 (KEDQ…NREY), and 468 to 501 (ANDC…EGKR).

Belongs to the IFT56 family. Component of the IFT complex B. Interacts with IFT46; the interaction is direct. As to expression, high expression detected in testis. Detected also retina, kidney, lung and brain tissue. The expression level is low in spleen. Expressed in the developing liver. Present in the airway epithelial cells and the testes (at protein level).

It localises to the cell projection. The protein localises to the cilium. In terms of biological role, component of the intraflagellar transport (IFT) complex B required for transport of proteins in the motile cilium. Required for transport of specific ciliary cargo proteins related to motility, while it is neither required for IFT complex B assembly or motion nor for cilium assembly. Required for efficient coupling between the accumulation of GLI2 and GLI3 at the ciliary tips and their dissociation from the negative regulator SUFU. Plays a key role in maintaining the integrity of the IFT complex B and the proper ciliary localization of the IFT complex B components. Not required for IFT complex A ciliary localization or function. Essential for maintaining proper microtubule organization within the ciliary axoneme. The polypeptide is Intraflagellar transport protein 56 (Mus musculus (Mouse)).